The sequence spans 325 residues: Heat-inducible transcription repressor HrcA (325 aa).

Belongs to the HrcA family.

Functionally, negative regulator of class I heat shock genes (grpE-dnaK-dnaJ and groELS operons). Prevents heat-shock induction of these operons. This Staphylococcus aureus (strain JH1) protein is Heat-inducible transcription repressor HrcA.